The chain runs to 517 residues: L-amino-acid oxidase (517 aa).

The first 18 residues, 1–18 (MNVFFMFSLLFLAALESC), serve as a signal peptide directing secretion. A disulfide bridge links cysteine 29 with cysteine 192. Residues 62–63 (MA), 82–83 (EA), arginine 90, and 106–109 (GPMR) each bind FAD. Residue arginine 109 participates in substrate binding. An N-linked (GlcNAc...) asparagine glycan is attached at asparagine 191. Valine 280 contributes to the FAD binding site. A disulfide bond links cysteine 350 and cysteine 431. Tyrosine 391 is a binding site for substrate. FAD is bound by residues glutamate 476 and 483–488 (GWIDST). 483 to 484 (GW) lines the substrate pocket.

Belongs to the flavin monoamine oxidase family. FIG1 subfamily. Homodimer; non-covalently linked. Requires FAD as cofactor. N-glycosylated. In terms of tissue distribution, expressed by the venom gland.

Its subcellular location is the secreted. The enzyme catalyses an L-alpha-amino acid + O2 + H2O = a 2-oxocarboxylate + H2O2 + NH4(+). Its function is as follows. Catalyzes an oxidative deamination of predominantly hydrophobic and aromatic L-amino acids, thus producing hydrogen peroxide that may contribute to the diverse toxic effects of this enzyme. Exhibits diverse biological activities, such as hemorrhage, hemolysis, edema, apoptosis of vascular endothelial cells or tumor cell lines, antibacterial and antiparasitic activities, as well as regulation of platelet aggregation. Its effect on platelets is controversial, since it either induces aggregation or inhibits agonist-induced aggregation. These different effects are probably due to different experimental conditions. This Demansia vestigiata (Lesser black whip snake) protein is L-amino-acid oxidase.